Here is a 239-residue protein sequence, read N- to C-terminus: tRNA1(Val) (adenine(37)-N6)-methyltransferase (239 aa).

The protein belongs to the methyltransferase superfamily. tRNA (adenine-N(6)-)-methyltransferase family.

It localises to the cytoplasm. It catalyses the reaction adenosine(37) in tRNA1(Val) + S-adenosyl-L-methionine = N(6)-methyladenosine(37) in tRNA1(Val) + S-adenosyl-L-homocysteine + H(+). Functionally, specifically methylates the adenine in position 37 of tRNA(1)(Val) (anticodon cmo5UAC). The chain is tRNA1(Val) (adenine(37)-N6)-methyltransferase from Vibrio vulnificus (strain YJ016).